A 1513-amino-acid chain; its full sequence is Mucin-2 (1513 aa).

The signal sequence occupies residues 1–20; sequence MGLPLARLVAVCLVLALAKG. The 173-residue stretch at 32 to 204 folds into the VWFD 1 domain; the sequence is HVCSTWGDFH…KINKPEVVCE (173 aa). 28 disulfide bridges follow: C34/C166, C56/C203, C64/C163, C215/C252, C222/C247, C234/C272, C254/C260, C262/C288, C292/C326, C309/C348, C328/C342, C350/C372, C367/C384, C370/C379, C388/C525, C410/C560, C432/C440, C571/C616, C585/C611, C598/C636, C618/C624, C626/C651, C658/C695, C671/C685, C675/C715, C697/C709, C717/C739, and C737/C746. Ca(2+) is bound at residue D46. The Cu(+) site is built by M143 and M151. E153 contributes to the Cu(2+) binding site. N160 carries an N-linked (GlcNAc...) asparagine glycan. Ca(2+) is bound by residues D168, N170, and E177. 2 residues coordinate Cu(2+): H274 and H321. The region spanning 292-348 is the TIL domain; sequence CPGNMVYLESGSPWLDTCSHLEVSSLCEEHYMDGCFCPEGTVYDDITGSGCIPVSQC. M323 is a Cu(+) binding site. Residues 350–410 form the VWFC domain; sequence CKLHGHLYMP…GKKFTFHGDC (61 aa). Positions 386–561 constitute a VWFD 2 domain; that stretch reads ETCALEGGSH…NTWKAQSSCH (176 aa). D400 is a Ca(2+) binding site. Residue N420 is glycosylated (N-linked (GlcNAc...) asparagine). Ca(2+) is bound by residues N527, N529, L531, D534, and D535. The N-linked (GlcNAc...) asparagine glycan is linked to N667. The N-linked (GlcNAc...) asparagine glycan is linked to N767. Disulfide bonds link C781-C817, C799-C811, C819-C842, C836-C854, C840-C849, C858-C989, C880-C1024, C889-C986, C906-C913, C1034-C1077, C1048-C1072, C1059-C1099, C1079-C1087, C1089-C1114, C1105-C1134, C1118-C1160, C1142-C1184, C1164-C1178, C1186-C1210, C1205-C1235, and C1208-C1218. N837 is a glycosylation site (N-linked (GlcNAc...) asparagine). Positions 856–1025 constitute a VWFD 3 domain; the sequence is STCSIYGSGH…NSWKEASTCP (170 aa). Residue D870 coordinates Ca(2+). Residue N892 is glycosylated (N-linked (GlcNAc...) asparagine). Ca(2+) is bound by residues N991, D993, N998, and D999. N-linked (GlcNAc...) asparagine glycosylation is found at N1136 and N1151. N1212, N1227, and N1243 each carry an N-linked (GlcNAc...) asparagine glycan. T1264, T1267, T1268, and T1280 each carry an O-linked (GalNAc) threonine glycan. O-linked (GalNAc) serine glycosylation is present at S1286. A glycan (O-linked (GalNAc) threonine) is linked at T1290. The Ca(2+) site is built by N1303, H1306, S1309, G1313, D1314, and E1316. N1350 carries an N-linked (GlcNAc...) asparagine glycan. Ca(2+)-binding residues include D1373 and Y1374. A run of 11 repeats spans residues 1392–1407, 1408–1423, 1424–1434, 1435–1445, 1446–1456, 1457–1467, 1468–1478, 1479–1489, 1490–1500, 1501–1511, and 1512–1513. Positions 1392–1513 are approximate repeats; sequence SPTTSTPISS…TSPTTSTTSP (122 aa). Residues 1392 to 1513 form a disordered region; sequence SPTTSTPISS…TSPTTSTTSP (122 aa).

As to quaternary structure, homomultimer; disulfide-linked. The N- and C-terminus mediate their assembly into higher order structures to form filaments. The CTCK domains of two polypeptides associate in the endoplasmic reticulum to generate intermolecularly disulfide-bonded dimers. These dimers progress to the Golgi apparatus, which is a more acidic environment than the endoplasmic reticulum. Under acidic conditions, the N-termini form non-covalent intermolecular interactions that juxtapose assemblies of the third VWD domain (VWD3) from different CTCK-linked dimers. The VWD3 assemblies then become disulfide bonded to one another to produce long, disulfide-linked polymers that remain highly compact until secretion. Interacts with FCGBP. Interacts with AGR2; disulfide-linked. In terms of processing, O-glycosylated. O-glycosylation is required for mucin assembly. Goblet cells synthesize two forms of mucin that differ in branched chain O-glycosylation and the site of production in the colon. May undergo proteolytic cleavage in the outer mucus layer of the colon, contributing to the expanded volume and loose nature of this layer which allows for bacterial colonization in contrast to the inner mucus layer which is dense and devoid of bacteria. Post-translationally, at low pH of 6 and under, undergoes autocatalytic cleavage in vitro in the N-terminal region of the fourth VWD domain. It is likely that this also occurs in vivo and is triggered by the low pH of the late secretory pathway. As to expression, expressed in intestine and airway.

It is found in the secreted. Coats the epithelia of the intestines and other mucus membrane-containing organs to provide a protective, lubricating barrier against particles and infectious agents at mucosal surfaces. Major constituent of the colon mucus, which is mainly formed by large polymeric networks of MUC2 secreted by goblet cells that cover the exposed surfaces of intestine. MUC2 networks form hydrogels that guard the underlying epithelium from pathogens and other hazardous matter entering from the outside world, while permitting nutrient absorption and gas exchange. Acts as a divalent copper chaperone that protects intestinal cells from copper toxicity and facilitates nutritional copper unptake into cells. Binds both Cu(2+) and its reduced form, Cu(1+), at two juxtaposed binding sites: Cu(2+), once reduced to Cu(1+) by vitamin C (ascorbate) or other dietary antioxidants, transits to the other binding site. MUC2-bound Cu(1+) is protected from oxidation in aerobic environments, and can be released for nutritional delivery to cells. Mucin gels store antimicrobial molecules that participate in innate immunity. Mucin glycoproteins also house and feed the microbiome, lubricate tissue surfaces, and may facilitate the removal of contaminants and waste products from the body. Goblet cells synthesize two forms of MUC2 mucin that differ in branched chain O-glycosylation and the site of production in the colon: a (1) 'thick' mucus that wraps the microbiota to form fecal pellets is produced in the proximal, ascending colon. 'Thick' mucus transits along the descending colon and is lubricated by a (2) 'thin' MUC2 mucus produced in the distal colon which adheres to the 'thick' mucus. This is Mucin-2 from Rattus norvegicus (Rat).